The primary structure comprises 879 residues: Alanine--tRNA ligase (879 aa).

Zn(2+)-binding residues include H566, H570, C668, and H672.

This sequence belongs to the class-II aminoacyl-tRNA synthetase family. Requires Zn(2+) as cofactor.

Its subcellular location is the cytoplasm. The enzyme catalyses tRNA(Ala) + L-alanine + ATP = L-alanyl-tRNA(Ala) + AMP + diphosphate. Functionally, catalyzes the attachment of alanine to tRNA(Ala) in a two-step reaction: alanine is first activated by ATP to form Ala-AMP and then transferred to the acceptor end of tRNA(Ala). Also edits incorrectly charged Ser-tRNA(Ala) and Gly-tRNA(Ala) via its editing domain. The polypeptide is Alanine--tRNA ligase (Clostridium novyi (strain NT)).